The following is a 484-amino-acid chain: tRNA sulfurtransferase (484 aa).

In terms of domain architecture, THUMP spans 63-167 (REMIERLTCT…LDRLFVIHRQ (105 aa)). ATP is bound by residues 185 to 186 (LM), K267, G289, and Q298. A disulfide bond links C346 and C457. In terms of domain architecture, Rhodanese spans 405–483 (VLPGQIVIDI…GHTNVRVYRP (79 aa)). C457 functions as the Cysteine persulfide intermediate in the catalytic mechanism.

It belongs to the ThiI family.

It is found in the cytoplasm. It carries out the reaction [ThiI sulfur-carrier protein]-S-sulfanyl-L-cysteine + a uridine in tRNA + 2 reduced [2Fe-2S]-[ferredoxin] + ATP + H(+) = [ThiI sulfur-carrier protein]-L-cysteine + a 4-thiouridine in tRNA + 2 oxidized [2Fe-2S]-[ferredoxin] + AMP + diphosphate. The enzyme catalyses [ThiS sulfur-carrier protein]-C-terminal Gly-Gly-AMP + S-sulfanyl-L-cysteinyl-[cysteine desulfurase] + AH2 = [ThiS sulfur-carrier protein]-C-terminal-Gly-aminoethanethioate + L-cysteinyl-[cysteine desulfurase] + A + AMP + 2 H(+). Its pathway is cofactor biosynthesis; thiamine diphosphate biosynthesis. Its function is as follows. Catalyzes the ATP-dependent transfer of a sulfur to tRNA to produce 4-thiouridine in position 8 of tRNAs, which functions as a near-UV photosensor. Also catalyzes the transfer of sulfur to the sulfur carrier protein ThiS, forming ThiS-thiocarboxylate. This is a step in the synthesis of thiazole, in the thiamine biosynthesis pathway. The sulfur is donated as persulfide by IscS. The chain is tRNA sulfurtransferase from Pseudomonas aeruginosa (strain UCBPP-PA14).